Consider the following 372-residue polypeptide: Alpha-1,3-mannosyl-glycoprotein 4-beta-N-acetylglucosaminyltransferase-like protein MGAT4D (372 aa).

The Cytoplasmic portion of the chain corresponds to 1-8; the sequence is MKTKNVNL. A helical; Signal-anchor for type II membrane protein transmembrane segment spans residues 9–29; sequence LFALVAVLLFGFSCFCISRMN. Residues 30 to 372 lie on the Lumenal side of the membrane; the sequence is QTNNQLINCR…REQHLKDHYY (343 aa). 2 N-linked (GlcNAc...) asparagine glycosylation sites follow: Asn54 and Asn143.

This sequence belongs to the glycosyltransferase 54 family. In terms of assembly, may self-associate; specifically in the endoplasmic reticulum prior to its translocation to the Golgi. Interacts with MGAT1, MGAT3 and MAN2A2; may interact with MGTA1 specifically in the Golgi. N-glycosylated. O-glycosylated; further modified with terminal sialic acid residues. In terms of tissue distribution, testis.

It is found in the golgi apparatus membrane. The protein localises to the endoplasmic reticulum membrane. May play a role in male spermatogenesis. In vitro acts as inhibitor of MGAT1 activity causing cell surface proteins to carry mainly high mannose N-glycans. The function is mediated by its lumenal domain and occurs specifically in the Golgi. A catalytic glucosyltransferase activity is not detected. May be involved in regulation of Sertoli-germ cell interactions during specific stages of spermatogenesis. This Rattus norvegicus (Rat) protein is Alpha-1,3-mannosyl-glycoprotein 4-beta-N-acetylglucosaminyltransferase-like protein MGAT4D.